The primary structure comprises 1171 residues: ATP-dependent helicase/deoxyribonuclease subunit B (1171 aa).

A UvrD-like helicase ATP-binding domain is found at 1-287; the sequence is MSLRFVIGRA…IPLMEQPRFH (287 aa). Position 8–15 (8–15) interacts with ATP; that stretch reads GRAGSGKS. Residues 281–587 enclose the UvrD-like helicase C-terminal domain; that stretch reads MEQPRFHSPA…QFANIPPSLD (307 aa). Residues Cys-805, Cys-1129, Cys-1132, and Cys-1138 each coordinate [4Fe-4S] cluster.

Belongs to the helicase family. AddB/RexB type 1 subfamily. As to quaternary structure, heterodimer of AddA and AddB. Mg(2+) serves as cofactor. Requires [4Fe-4S] cluster as cofactor.

In terms of biological role, the heterodimer acts as both an ATP-dependent DNA helicase and an ATP-dependent, dual-direction single-stranded exonuclease. Recognizes the chi site generating a DNA molecule suitable for the initiation of homologous recombination. The AddB subunit has 5' -&gt; 3' nuclease activity but not helicase activity. This Bacillus cereus (strain G9842) protein is ATP-dependent helicase/deoxyribonuclease subunit B.